The sequence spans 207 residues: Phosphoribosylglycinamide formyltransferase (207 aa).

13–15 (GSN) provides a ligand contact to N(1)-(5-phospho-beta-D-ribosyl)glycinamide. (6R)-10-formyltetrahydrofolate is bound by residues 100-103 (MHIL) and Asn120. The Proton donor role is filled by His122. Asp162 is a binding site for (6R)-10-formyltetrahydrofolate. Position 191 (Glu191) interacts with N(1)-(5-phospho-beta-D-ribosyl)glycinamide.

It belongs to the GART family.

It catalyses the reaction N(1)-(5-phospho-beta-D-ribosyl)glycinamide + (6R)-10-formyltetrahydrofolate = N(2)-formyl-N(1)-(5-phospho-beta-D-ribosyl)glycinamide + (6S)-5,6,7,8-tetrahydrofolate + H(+). The protein operates within purine metabolism; IMP biosynthesis via de novo pathway; N(2)-formyl-N(1)-(5-phospho-D-ribosyl)glycinamide from N(1)-(5-phospho-D-ribosyl)glycinamide (10-formyl THF route): step 1/1. The polypeptide is Phosphoribosylglycinamide formyltransferase (ade5) (Schizosaccharomyces pombe (strain 972 / ATCC 24843) (Fission yeast)).